The primary structure comprises 357 residues: D-alanine--D-alanine ligase (357 aa).

Residues 134-339 (KQLFEHRGLP…YPDLIAKLID (206 aa)) enclose the ATP-grasp domain. Residue 167-222 (NDKLTYPVFVKPANLGSSVGISKCNNEEELKSGITEAFQFDRKLVIEQGINAREIE) coordinates ATP. Mg(2+)-binding residues include D293, E306, and N308.

The protein belongs to the D-alanine--D-alanine ligase family. It depends on Mg(2+) as a cofactor. Mn(2+) serves as cofactor.

It localises to the cytoplasm. It catalyses the reaction 2 D-alanine + ATP = D-alanyl-D-alanine + ADP + phosphate + H(+). Its pathway is cell wall biogenesis; peptidoglycan biosynthesis. In terms of biological role, cell wall formation. In Staphylococcus epidermidis (strain ATCC 12228 / FDA PCI 1200), this protein is D-alanine--D-alanine ligase.